Reading from the N-terminus, the 72-residue chain is Peptide Ctri9194 (72 aa).

The first 23 residues, 1-23 (MKTQNVLLSFGIVFLMISFSSET), serve as a signal peptide directing secretion. Isoleucine 38 is subject to Isoleucine amide. A propeptide spanning residues 42–72 (SLKDVESLDFLFDPTFTAADLAVLENALEDY) is cleaved from the precursor.

The protein belongs to the non-disulfide-bridged peptide (NDBP) superfamily. Short antimicrobial peptide (group 4) family. In terms of tissue distribution, expressed by the venom gland.

The protein localises to the secreted. In terms of biological role, antimicrobial peptide. This Chaerilus tricostatus (Scorpion) protein is Peptide Ctri9194.